A 503-amino-acid chain; its full sequence is E3 ubiquitin-protein ligase ariadne-1 (503 aa).

Residues 1–11 (MDSDNDNDFCD) show a composition bias toward acidic residues. Residues 1 to 40 (MDSDNDNDFCDNVDSGNVSSGDDGDDDFGMEVDLPSSADR) form a disordered region. Residues 12–21 (NVDSGNVSSG) show a composition bias toward low complexity. The segment at 129–340 (QCEECEICFS…SSWYNCNRYD (212 aa)) is TRIAD supradomain. Positions 133, 136, 150, 152, 155, 158, 178, 183, 223, 228, 244, 246, 251, 254, 259, 264, 291, and 294 each coordinate Zn(2+). The RING-type 1 zinc-finger motif lies at 133–183 (CEICFSQLPPDSMAGLECGHRFCMPCWHEYLSTKIVAEGLGQTISCAAHGC). The segment at 133–201 (CEICFSQLPP…VANLVTDARV (69 aa)) is important for interaction with Ubc10. The segment at 203-264 (VKYQQLITNS…GENWHDPVKC (62 aa)) adopts an IBR-type zinc-finger fold. The RING-type 2; atypical zinc finger occupies 291–322 (CPRCSVTIEKDGGCNHMVCKNQNCKNEFCWVC). Cys-304 is an active-site residue. Zn(2+)-binding residues include Cys-309, Cys-314, Cys-319, Cys-322, His-329, and Cys-336. Residues 341 to 361 (EDEAKTARDAQEKLRSSLARY) adopt a coiled-coil conformation.

The protein belongs to the RBR family. Ariadne subfamily. In terms of assembly, can form homodimers. Interacts (via RING-type 1 zinc finger) with Ubc10. Interacts with the LINC complex member koi. Interacts with park. Interacts with ari-2. Specifically interacts with isoform ECR-A of EcR. In terms of processing, autophosphorylated. In terms of tissue distribution, widely expressed, with prominent levels in the nervous system and female gonads.

The protein resides in the cytoplasm. It localises to the nucleus. It catalyses the reaction [E2 ubiquitin-conjugating enzyme]-S-ubiquitinyl-L-cysteine + [acceptor protein]-L-lysine = [E2 ubiquitin-conjugating enzyme]-L-cysteine + [acceptor protein]-N(6)-ubiquitinyl-L-lysine.. Atypical E3 ubiquitin-protein ligase, which catalyzes ubiquitination of target proteins together with ubiquitin-conjugating enzyme E2 Ubc10. Controls the subcellular localization and morphology of muscle nuclei (myonuclei) by regulating the protein levels and distribution of the LINC (LInker of Nucleoskeleton and Cytoskeleton) complex. Functions by mediating the monoubiquitination of the LINC complex subunit koi leading to its subsequent proteasomal degradation. Appears to function, at least partially redundantly, with the RBR E3 ligase family member park in nuclear localization and morphology. Likely to function in metamorphosis by regulating the proteins levels of EcR isoform A (ECR-A) and its heterodimeric partner usp, via the ubiquitination and subsequent degradation of ECR-A. The protein is E3 ubiquitin-protein ligase ariadne-1 of Drosophila melanogaster (Fruit fly).